A 473-amino-acid chain; its full sequence is Probable glycine dehydrogenase (decarboxylating) subunit 2 (473 aa).

Residues 1-40 are disordered; the sequence is MEHYEQARYAPAEGETNEPLLSENDQTTVSVDPSLPDDLT. At K270 the chain carries N6-(pyridoxal phosphate)lysine.

This sequence belongs to the GcvP family. C-terminal subunit subfamily. As to quaternary structure, the glycine cleavage system is composed of four proteins: P, T, L and H. In this organism, the P 'protein' is a heterodimer of two subunits. Requires pyridoxal 5'-phosphate as cofactor.

It catalyses the reaction N(6)-[(R)-lipoyl]-L-lysyl-[glycine-cleavage complex H protein] + glycine + H(+) = N(6)-[(R)-S(8)-aminomethyldihydrolipoyl]-L-lysyl-[glycine-cleavage complex H protein] + CO2. The glycine cleavage system catalyzes the degradation of glycine. The P protein binds the alpha-amino group of glycine through its pyridoxal phosphate cofactor; CO(2) is released and the remaining methylamine moiety is then transferred to the lipoamide cofactor of the H protein. The sequence is that of Probable glycine dehydrogenase (decarboxylating) subunit 2 from Halobacterium salinarum (strain ATCC 700922 / JCM 11081 / NRC-1) (Halobacterium halobium).